The following is a 287-amino-acid chain: Nematocyst expressed protein 6 (287 aa).

Positions 1-20 are cleaved as a signal peptide; it reads MKGFIFAGVLVSALICLAEG. Residues 53–249 enclose the Peptidase M12A domain; that stretch reads RAALRDRYLW…RQTNLMYKCN (197 aa). 2 disulfide bridges follow: cysteine 95–cysteine 248 and cysteine 116–cysteine 139. Residue histidine 146 participates in Zn(2+) binding. The active site involves glutamate 147. Histidine 150 and histidine 156 together coordinate Zn(2+). The interval 249–287 is disordered; sequence NAQGDSELQPVNDEDEDKDGGDSKKKPDPKGPKPGEIEE. Over residues 268–287 the composition is skewed to basic and acidic residues; it reads GGDSKKKPDPKGPKPGEIEE.

The cofactor is Zn(2+). In terms of tissue distribution, nematocyte and pharyngeal gland.

It is found in the secreted. The protein localises to the nematocyst. Metalloprotease. In Nematostella vectensis (Starlet sea anemone), this protein is Nematocyst expressed protein 6.